The following is a 273-amino-acid chain: Bis(5'-nucleosyl)-tetraphosphatase, symmetrical (273 aa).

This sequence belongs to the Ap4A hydrolase family.

The catalysed reaction is P(1),P(4)-bis(5'-adenosyl) tetraphosphate + H2O = 2 ADP + 2 H(+). Functionally, hydrolyzes diadenosine 5',5'''-P1,P4-tetraphosphate to yield ADP. This is Bis(5'-nucleosyl)-tetraphosphatase, symmetrical from Histophilus somni (strain 129Pt) (Haemophilus somnus).